The sequence spans 95 residues: Small ribosomal subunit protein bS20 (95 aa).

Disordered stretches follow at residues 1–26 (MALR…RSRK) and 76–95 (KSRL…AQPA). Positions 80–95 (AKALNKAKAAQAAQPA) are enriched in low complexity.

The protein belongs to the bacterial ribosomal protein bS20 family.

Binds directly to 16S ribosomal RNA. This is Small ribosomal subunit protein bS20 from Deinococcus geothermalis (strain DSM 11300 / CIP 105573 / AG-3a).